The primary structure comprises 259 residues: Tryptophan synthase alpha chain (259 aa).

Active-site proton acceptor residues include E42 and D53.

It belongs to the TrpA family. As to quaternary structure, tetramer of two alpha and two beta chains.

It catalyses the reaction (1S,2R)-1-C-(indol-3-yl)glycerol 3-phosphate + L-serine = D-glyceraldehyde 3-phosphate + L-tryptophan + H2O. It participates in amino-acid biosynthesis; L-tryptophan biosynthesis; L-tryptophan from chorismate: step 5/5. Its function is as follows. The alpha subunit is responsible for the aldol cleavage of indoleglycerol phosphate to indole and glyceraldehyde 3-phosphate. The chain is Tryptophan synthase alpha chain from Erythrobacter litoralis (strain HTCC2594).